The primary structure comprises 326 residues: Melanocortin receptor 4 (326 aa).

Positions 1–14 are enriched in basic residues; that stretch reads MNTSHHHGLHHSFR. A disordered region spans residues 1–31; that stretch reads MNTSHHHGLHHSFRNHSQGALPVGKPSHGDR. The Extracellular portion of the chain corresponds to 1–46; sequence MNTSHHHGLHHSFRNHSQGALPVGKPSHGDRGSASGCYEQLLISTE. N-linked (GlcNAc...) asparagine glycosylation is found at Asn2 and Asn15. Residues 47-67 form a helical membrane-spanning segment; it reads IFLTLGLVSLLENILVIAAIV. Topologically, residues 68 to 71 are cytoplasmic; the sequence is KNKN. A helical transmembrane segment spans residues 72 to 92; sequence LHSPMYFFICSLAVADLLVSV. The Extracellular segment spans residues 93-121; sequence SNASETVVMALITGGNLTNRESIIKNMDN. Asn94 and Asn108 each carry an N-linked (GlcNAc...) asparagine glycan. A helical membrane pass occupies residues 122-142; that stretch reads VFDSMICSSLLASIWSLLAIA. Residues 143-163 lie on the Cytoplasmic side of the membrane; sequence VDRYITIFYALRYHNIMTQRR. A helical membrane pass occupies residues 164-184; the sequence is AGTIITCIWTFCTVSGVLFIV. Topologically, residues 185–190 are extracellular; sequence YSESTT. A helical transmembrane segment spans residues 191-211; sequence VLICLISMFFTMLALMASLYV. Over 212–246 the chain is Cytoplasmic; sequence HMFLLARLHMKRIAALPGNGPIWQAANMKGAITIT. Residues 247–267 form a helical membrane-spanning segment; sequence ILLGVFVVCWAPFFLHLILMI. At 268 to 281 the chain is on the extracellular side; that stretch reads SCPRNPYCVCFMSH. A helical membrane pass occupies residues 282-302; the sequence is FNMYLILIMCNSVIDPLIYAF. At 303 to 326 the chain is on the cytoplasmic side; sequence RSQEMRKTFKEICCCWYGLASLCV. Residue Cys316 is the site of S-palmitoyl cysteine attachment.

It belongs to the G-protein coupled receptor 1 family. In terms of assembly, homodimer; disulfide-linked, also forms higher order oligomers. Interacts with mrap2a; decreasing ligand-sensitivity. Interacts with mrap2b; increasing ligand-sensitivity and generation of cAMP.

It is found in the cell membrane. In terms of biological role, receptor specific to the heptapeptide core common to adrenocorticotropic hormone and alpha-, beta-, and gamma-MSH. Plays a central role in energy homeostasis and somatic growth. This receptor is mediated by G proteins that stimulate adenylate cyclase (cAMP). This is Melanocortin receptor 4 (mc4r) from Danio rerio (Zebrafish).